The chain runs to 126 residues: Small ribosomal subunit protein uS12 (126 aa).

Residues M1–P28 form a disordered region. D89 carries the post-translational modification 3-methylthioaspartic acid. The segment at D103–K126 is disordered. The span at A113 to K126 shows a compositional bias: basic residues.

The protein belongs to the universal ribosomal protein uS12 family. In terms of assembly, part of the 30S ribosomal subunit. Contacts proteins S8 and S17. May interact with IF1 in the 30S initiation complex.

With S4 and S5 plays an important role in translational accuracy. Functionally, interacts with and stabilizes bases of the 16S rRNA that are involved in tRNA selection in the A site and with the mRNA backbone. Located at the interface of the 30S and 50S subunits, it traverses the body of the 30S subunit contacting proteins on the other side and probably holding the rRNA structure together. The combined cluster of proteins S8, S12 and S17 appears to hold together the shoulder and platform of the 30S subunit. The sequence is that of Small ribosomal subunit protein uS12 from Burkholderia orbicola (strain MC0-3).